Reading from the N-terminus, the 450-residue chain is Histidinol dehydrogenase (450 aa).

Positions 135, 197, and 225 each coordinate NAD(+). Substrate is bound by residues T248, Q270, and H273. Zn(2+) contacts are provided by Q270 and H273. Residues E339 and H340 each act as proton acceptor in the active site. H340, D373, E427, and H432 together coordinate substrate. D373 is a binding site for Zn(2+). Position 432 (H432) interacts with Zn(2+).

Belongs to the histidinol dehydrogenase family. Requires Zn(2+) as cofactor.

It carries out the reaction L-histidinol + 2 NAD(+) + H2O = L-histidine + 2 NADH + 3 H(+). Its pathway is amino-acid biosynthesis; L-histidine biosynthesis; L-histidine from 5-phospho-alpha-D-ribose 1-diphosphate: step 9/9. Its function is as follows. Catalyzes the sequential NAD-dependent oxidations of L-histidinol to L-histidinaldehyde and then to L-histidine. The chain is Histidinol dehydrogenase from Corynebacterium jeikeium (strain K411).